Reading from the N-terminus, the 487-residue chain is GTPase Der (487 aa).

EngA-type G domains lie at 2 to 164 (KTIA…SLAK) and 203 to 374 (IAVG…QRFA). GTP-binding positions include 8 to 15 (GKPNVGKS), 55 to 59 (DTGGI), 116 to 119 (NKVD), 209 to 216 (GRVNVGKS), 256 to 260 (DTAGI), and 320 to 323 (NKWD). The 85-residue stretch at 375-459 (YRIPTSALND…PILLSVKGKN (85 aa)) folds into the KH-like domain. Residues 459-480 (NAKDEENTSAKKESPSKVSHRE) are compositionally biased toward basic and acidic residues. A disordered region spans residues 459-487 (NAKDEENTSAKKESPSKVSHRESKNRRFV).

The protein belongs to the TRAFAC class TrmE-Era-EngA-EngB-Septin-like GTPase superfamily. EngA (Der) GTPase family. As to quaternary structure, associates with the 50S ribosomal subunit.

GTPase that plays an essential role in the late steps of ribosome biogenesis. The protein is GTPase Der of Helicobacter hepaticus (strain ATCC 51449 / 3B1).